Consider the following 447-residue polypeptide: UDP-N-acetyl-alpha-D-muramoyl-L-alanyl-L-glutamate epimerase (447 aa).

The protein belongs to the MurL family.

The enzyme catalyses UDP-N-acetyl-alpha-D-muramoyl-L-alanyl-L-glutamate + ATP + H2O = UDP-N-acetyl-alpha-D-muramoyl-L-alanyl-D-glutamate + AMP + diphosphate + H(+). It functions in the pathway cell wall biogenesis; peptidoglycan biosynthesis. Its function is as follows. Cell wall formation. Catalyzes epimerization of the terminal L-glutamate in UDP-N-acetyl-alpha-D-muramoyl-L-alanyl-L-glutamate. The sequence is that of UDP-N-acetyl-alpha-D-muramoyl-L-alanyl-L-glutamate epimerase from Micromonospora sp. (strain ATCC 39149 / NRRL 15099 / SCC 1413).